A 382-amino-acid chain; its full sequence is Mannitol-1-phosphate 5-dehydrogenase (382 aa).

3-14 contacts NAD(+); sequence ALHFGAGNIGRG.

The protein belongs to the mannitol dehydrogenase family.

The enzyme catalyses D-mannitol 1-phosphate + NAD(+) = beta-D-fructose 6-phosphate + NADH + H(+). The chain is Mannitol-1-phosphate 5-dehydrogenase from Klebsiella pneumoniae (strain 342).